The sequence spans 620 residues: Glutathione-regulated potassium-efflux system protein KefC (620 aa).

12 consecutive transmembrane segments (helical) span residues 4-24, 26-46, 54-74, 90-110, 114-134, 149-169, 178-198, 218-238, 270-290, 294-314, 327-347, and 359-379; these read HTLLQALIYLGSAALIVPIAV, LGLGSVLGYLIAGCIIGPWGL, SILHFAEIGVVLMLFVIGLEL, GALQMVVCGGLIGLFCMFLGL, VAELIGMTLALSSTAIAMQAM, FAVLLFQDIAAIPLVAMIPLL, LGAFALSALKVAGALALVVLL, VFSAVALFLVFGFGLLLEEVG, GLLLGLFFIGVGMSIDFGTLV, LRILLLLAGFLAIKIVMLWLV, WFAVLLGQGSKFAFVVFGAAQ, and ALTLAVALSMAATPIFLVLLT. Residues 399–518 form the RCK N-terminal domain; that stretch reads QPRVIVAGFG…AGVAMPERET (120 aa). Residues 599–620 form a disordered region; it reads QGTAEGKHSGEAADEPEVKPSI.

Belongs to the monovalent cation:proton antiporter 2 (CPA2) transporter (TC 2.A.37) family. KefC subfamily. As to quaternary structure, homodimer. Interacts with the regulatory subunit KefF.

The protein localises to the cell inner membrane. In terms of biological role, pore-forming subunit of a potassium efflux system that confers protection against electrophiles. Catalyzes K(+)/H(+) antiport. The protein is Glutathione-regulated potassium-efflux system protein KefC of Salmonella choleraesuis (strain SC-B67).